Consider the following 907-residue polypeptide: Whirlin (907 aa).

The region spanning 140-223 is the PDZ 1 domain; sequence LVSLRRAKAH…LVLSVYSAGR (84 aa). A disordered region spans residues 243 to 264; sequence SISPPSGLPQPHGGALRQQEGD. One can recognise a PDZ 2 domain in the interval 279-361; sequence KVNLVLGDGR…LILTVKDVGR (83 aa). Disordered stretches follow at residues 502-540, 565-663, 684-717, and 742-815; these read SMKARQPPGPGAGDTYSMVSYSDTGSSTGSHGTSTTVSS, SVDD…SSKR, QSPPHLKSPSAEATVAGGCLLPPSPSGHPDQTGT, and PQTR…PTST. Residues 521–540 show a composition bias toward low complexity; that stretch reads SYSDTGSSTGSHGTSTTVSS. Positions 609 to 626 are enriched in polar residues; sequence PPSSMPSCSGTVFSAPQN. Low complexity predominate over residues 628-642; it reads SPPAGTAPTPGTSSA. S685 is subject to Phosphoserine. Polar residues predominate over residues 743 to 762; the sequence is QTRTASTLSQLSDSGQTLSE. Residues 789–800 show a composition bias toward basic and acidic residues; sequence SSKELPRNERPT. Residues 816 to 899 enclose the PDZ 3 domain; the sequence is LVRVKKSAAT…TKDRDYIDFL (84 aa).

In terms of assembly, forms homooligomers. Interacts (via C-terminal PDZ domain) with MYO15A; this interaction is necessary for localization of WHRN to stereocilia tips. Interacts (via C-terminal PDZ domain) with MPP1/p55. Interacts with LRRC4C/NGL1. Interacts with MYO7A. Interacts with RPGR. Interacts with EPS8. Interacts with CASK. Interacts with CIB2. Component of USH2 complex, composed of ADGRV1, PDZD7, USH2A and WHRN. Interacts (via PDZ domains) with PDZD7; the interaction is direct. Interacts (via N-terminal PDZ domain) with USH2A (via cytoplasmic region). Interacts with ADGRV1/MASS1 (via cytoplasmic region).

It is found in the cytoplasm. It localises to the cell projection. Its subcellular location is the stereocilium. The protein resides in the growth cone. The protein localises to the photoreceptor inner segment. It is found in the synapse. Functionally, involved in hearing and vision as member of the USH2 complex. Necessary for elongation and maintenance of inner and outer hair cell stereocilia in the organ of Corti in the inner ear. Involved in the maintenance of the hair bundle ankle region, which connects stereocilia in cochlear hair cells of the inner ear. In retina photoreceptors, required for the maintenance of periciliary membrane complex that seems to play a role in regulating intracellular protein transport. The sequence is that of Whirlin from Homo sapiens (Human).